The sequence spans 147 residues: Large ribosomal subunit protein uL15 (147 aa).

The segment covering 1–13 (MELHSLKAAEGSR) has biased composition (basic and acidic residues). The disordered stretch occupies residues 1–57 (MELHSLKAAEGSRKVRNRVGRGTSSGNGKTSGRGQKGQKSRSGGGVRPGFEGGQTEL). 2 stretches are compositionally biased toward gly residues: residues 23–35 (TSSGNGKTSGRGQ) and 42–52 (SGGGVRPGFEG).

Belongs to the universal ribosomal protein uL15 family. As to quaternary structure, part of the 50S ribosomal subunit.

In terms of biological role, binds to the 23S rRNA. The sequence is that of Large ribosomal subunit protein uL15 from Lactococcus lactis subsp. cremoris (strain MG1363).